A 145-amino-acid chain; its full sequence is Endoribonuclease YbeY (145 aa).

His-109, His-113, and His-119 together coordinate Zn(2+).

Belongs to the endoribonuclease YbeY family. It depends on Zn(2+) as a cofactor.

It is found in the cytoplasm. In terms of biological role, single strand-specific metallo-endoribonuclease involved in late-stage 70S ribosome quality control and in maturation of the 3' terminus of the 16S rRNA. The chain is Endoribonuclease YbeY from Ruthia magnifica subsp. Calyptogena magnifica.